A 288-amino-acid polypeptide reads, in one-letter code: ATP synthase gamma chain (288 aa).

It belongs to the ATPase gamma chain family. F-type ATPases have 2 components, CF(1) - the catalytic core - and CF(0) - the membrane proton channel. CF(1) has five subunits: alpha(3), beta(3), gamma(1), delta(1), epsilon(1). CF(0) has three main subunits: a, b and c.

It is found in the cell inner membrane. Produces ATP from ADP in the presence of a proton gradient across the membrane. The gamma chain is believed to be important in regulating ATPase activity and the flow of protons through the CF(0) complex. This chain is ATP synthase gamma chain, found in Trichlorobacter lovleyi (strain ATCC BAA-1151 / DSM 17278 / SZ) (Geobacter lovleyi).